We begin with the raw amino-acid sequence, 192 residues long: Rho-related protein racC (192 aa).

13–20 (GDGAVGKT) serves as a coordination point for GTP. Positions 35-43 (YIPTVFDNY) match the Effector region motif. Residues 60-64 (DTAGQ) and 118-121 (TKLD) each bind GTP. At Cys-189 the chain carries Cysteine methyl ester. Cys-189 is lipidated: S-geranylgeranyl cysteine. Positions 190-192 (IVM) are cleaved as a propeptide — removed in mature form.

This sequence belongs to the small GTPase superfamily. Rho family. As to quaternary structure, interacts with pakB.

The protein localises to the cell membrane. The protein is Rho-related protein racC (racC) of Dictyostelium discoideum (Social amoeba).